The primary structure comprises 142 residues: Large ribosomal subunit protein uL13 (142 aa).

This sequence belongs to the universal ribosomal protein uL13 family. As to quaternary structure, part of the 50S ribosomal subunit.

Functionally, this protein is one of the early assembly proteins of the 50S ribosomal subunit, although it is not seen to bind rRNA by itself. It is important during the early stages of 50S assembly. The sequence is that of Large ribosomal subunit protein uL13 from Pseudomonas syringae pv. syringae (strain B728a).